The sequence spans 344 residues: Transcription factor AIG1 (344 aa).

The bHLH domain occupies 131–180; that stretch reads AASKSHSEAERRRRERINTHLAKLRSILPNTTKTDKASLLAEVIQHMKEL. Residues 313 to 344 form a disordered region; the sequence is NDESNDNNNLEKSSSGGIKRQRTSKMVNRCYN. Residues 318 to 327 are compositionally biased toward low complexity; the sequence is DNNNLEKSSS.

Homodimer. Interacts with LHW.

The protein localises to the nucleus. Functionally, transcription factor required for MONOPTEROS-dependent root initiation in embryo. Transcriptionally controlled by MONOPTEROS. This Arabidopsis thaliana (Mouse-ear cress) protein is Transcription factor AIG1 (BHLH32).